The chain runs to 164 residues: Transcription elongation factor GreA (164 aa).

Residues 12-38 (RRLERELERLKKERPGVILAIKEAREE) adopt a coiled-coil conformation.

This sequence belongs to the GreA/GreB family.

Functionally, necessary for efficient RNA polymerase transcription elongation past template-encoded arresting sites. The arresting sites in DNA have the property of trapping a certain fraction of elongating RNA polymerases that pass through, resulting in locked ternary complexes. Cleavage of the nascent transcript by cleavage factors such as GreA or GreB allows the resumption of elongation from the new 3'terminus. GreA releases sequences of 2 to 3 nucleotides. The chain is Transcription elongation factor GreA from Solidesulfovibrio magneticus (strain ATCC 700980 / DSM 13731 / RS-1) (Desulfovibrio magneticus).